We begin with the raw amino-acid sequence, 440 residues long: NK1 transcription factor-related protein 1 (440 aa).

The span at 1–13 (MSTSGPAAPGDVP) shows a compositional bias: low complexity. Disordered regions lie at residues 1 to 82 (MSTS…RPTS), 145 to 291 (GVAA…PRRA), and 342 to 387 (KWKK…PMGA). A compositionally biased stretch (pro residues) spans 14 to 31 (ALPPPPPGPGSGPAPPAP). Low complexity-rich tracts occupy residues 62–74 (VPAV…AARP) and 145–158 (GVAA…TSAG). Positions 170–181 (GYSSGSGRSPTA) are enriched in polar residues. The segment covering 182 to 198 (DSEDEAPEDEDEEEAPE) has biased composition (acidic residues). Over residues 210–222 (GGSGGLGARGSGC) the composition is skewed to gly residues. The span at 237 to 269 (AAPGPRGNSPGAPGPPATATGAGSAGSTPQGAA) shows a compositional bias: low complexity. A DNA-binding region (homeobox) is located at residues 288–347 (PRRARTAFTYEQLVALENKFKATRYLSVCERLNLALSLSLTETQVKIWFQNRRTKWKKQN). Residues 356 to 374 (TGGGGGPGPGAGPGAGLPG) are compositionally biased toward gly residues.

It belongs to the NK-1 homeobox family.

The protein localises to the nucleus. Functionally, may be required for the coordinated crosstalk of factors involved in the maintenance of energy homeostasis, possibly by regulating the transcription of specific factors involved in energy balance. The chain is NK1 transcription factor-related protein 1 from Mus musculus (Mouse).